Consider the following 585-residue polypeptide: Probable inactive serine/threonine-protein kinase slob1 (585 aa).

The segment at aspartate 21–glutamate 82 adopts an FYVE-type zinc-finger fold. Zn(2+) is bound by residues cysteine 27, cysteine 30, cysteine 43, cysteine 46, cysteine 51, cysteine 54, cysteine 74, and cysteine 77. A Protein kinase domain is found at serine 108 to asparagine 478. Low complexity-rich tracts occupy residues isoleucine 426–serine 456 and leucine 466–proline 503. Positions isoleucine 426 to lysine 585 are disordered. The span at threonine 513–serine 532 shows a compositional bias: pro residues. The span at serine 533–serine 542 shows a compositional bias: low complexity. A WH2 domain is found at serine 542–threonine 562.

The protein belongs to the protein kinase superfamily. Ser/Thr protein kinase family.

The protein is Probable inactive serine/threonine-protein kinase slob1 (slob1) of Dictyostelium discoideum (Social amoeba).